A 273-amino-acid chain; its full sequence is NAD-dependent protein deacylase (273 aa).

One can recognise a Deacetylase sirtuin-type domain in the interval 20–272 (RERLRQRIFF…PEFVDKFLKG (253 aa)). Residue 48-67 (GAGISAESGIRTFRAADGLW) coordinates NAD(+). Substrate contacts are provided by Y92 and R95. 129–132 (QNID) provides a ligand contact to NAD(+). The active-site Proton acceptor is H147. Residues C155 and C174 each coordinate Zn(2+). NAD(+)-binding positions include 214-216 (GTS), 240-242 (NLE), and A258.

It belongs to the sirtuin family. Class III subfamily. Requires Zn(2+) as cofactor.

It localises to the cytoplasm. It catalyses the reaction N(6)-acetyl-L-lysyl-[protein] + NAD(+) + H2O = 2''-O-acetyl-ADP-D-ribose + nicotinamide + L-lysyl-[protein]. The catalysed reaction is N(6)-succinyl-L-lysyl-[protein] + NAD(+) + H2O = 2''-O-succinyl-ADP-D-ribose + nicotinamide + L-lysyl-[protein]. The enzyme catalyses N(6)-(2-hydroxyisobutanoyl)-L-lysyl-[protein] + NAD(+) + H2O = 2''-O-(2-hydroxyisobutanoyl)-ADP-D-ribose + nicotinamide + L-lysyl-[protein]. NAD-dependent lysine deacetylase that specifically removes acetyl groups on target proteins. Also acts as a protein-lysine deacylase by mediating protein desuccinylation and de-2-hydroxyisobutyrylation. Modulates the activities of several proteins which are inactive in their acylated form. The polypeptide is NAD-dependent protein deacylase (Salmonella typhi).